The sequence spans 184 residues: ATP-dependent protease subunit HslV (184 aa).

Threonine 12 is a catalytic residue. Residues glycine 167, cysteine 170, and threonine 173 each contribute to the Na(+) site.

This sequence belongs to the peptidase T1B family. HslV subfamily. In terms of assembly, a double ring-shaped homohexamer of HslV is capped on each side by a ring-shaped HslU homohexamer. The assembly of the HslU/HslV complex is dependent on binding of ATP.

Its subcellular location is the cytoplasm. The catalysed reaction is ATP-dependent cleavage of peptide bonds with broad specificity.. Allosterically activated by HslU binding. Its function is as follows. Protease subunit of a proteasome-like degradation complex believed to be a general protein degrading machinery. The sequence is that of ATP-dependent protease subunit HslV from Wolbachia sp. subsp. Drosophila simulans (strain wRi).